Here is a 646-residue protein sequence, read N- to C-terminus: Chaperone protein DnaK (646 aa).

Phosphothreonine; by autocatalysis is present on threonine 198. The tract at residues 603–646 is disordered; the sequence is EQAQQAGGAEGFDPNAFQGGDAGQQKADDGVVDAEFTEVKDDKK. A compositionally biased stretch (low complexity) spans 618–627; that stretch reads AFQGGDAGQQ.

The protein belongs to the heat shock protein 70 family.

Acts as a chaperone. In Acinetobacter baumannii (strain AB307-0294), this protein is Chaperone protein DnaK.